Here is a 104-residue protein sequence, read N- to C-terminus: Pyrimidine/purine nucleoside phosphorylase (104 aa).

It belongs to the nucleoside phosphorylase PpnP family.

The catalysed reaction is a purine D-ribonucleoside + phosphate = a purine nucleobase + alpha-D-ribose 1-phosphate. It carries out the reaction adenosine + phosphate = alpha-D-ribose 1-phosphate + adenine. It catalyses the reaction cytidine + phosphate = cytosine + alpha-D-ribose 1-phosphate. The enzyme catalyses guanosine + phosphate = alpha-D-ribose 1-phosphate + guanine. The catalysed reaction is inosine + phosphate = alpha-D-ribose 1-phosphate + hypoxanthine. It carries out the reaction thymidine + phosphate = 2-deoxy-alpha-D-ribose 1-phosphate + thymine. It catalyses the reaction uridine + phosphate = alpha-D-ribose 1-phosphate + uracil. The enzyme catalyses xanthosine + phosphate = alpha-D-ribose 1-phosphate + xanthine. In terms of biological role, catalyzes the phosphorolysis of diverse nucleosides, yielding D-ribose 1-phosphate and the respective free bases. Can use uridine, adenosine, guanosine, cytidine, thymidine, inosine and xanthosine as substrates. Also catalyzes the reverse reactions. The protein is Pyrimidine/purine nucleoside phosphorylase of Leptospira borgpetersenii serovar Hardjo-bovis (strain L550).